A 139-amino-acid polypeptide reads, in one-letter code: D-ribose pyranase (139 aa).

The Proton donor role is filled by His20. Residues Asp28, His106, and 128 to 130 each bind substrate; that span reads YAN.

This sequence belongs to the RbsD / FucU family. RbsD subfamily. As to quaternary structure, homodecamer.

The protein resides in the cytoplasm. It carries out the reaction beta-D-ribopyranose = beta-D-ribofuranose. It participates in carbohydrate metabolism; D-ribose degradation; D-ribose 5-phosphate from beta-D-ribopyranose: step 1/2. In terms of biological role, catalyzes the interconversion of beta-pyran and beta-furan forms of D-ribose. The sequence is that of D-ribose pyranase from Proteus mirabilis (strain HI4320).